The following is a 133-amino-acid chain: Small ribosomal subunit protein uS8 (133 aa).

Belongs to the universal ribosomal protein uS8 family. As to quaternary structure, part of the 30S ribosomal subunit. Contacts proteins S5 and S12.

Functionally, one of the primary rRNA binding proteins, it binds directly to 16S rRNA central domain where it helps coordinate assembly of the platform of the 30S subunit. The protein is Small ribosomal subunit protein uS8 of Microcystis aeruginosa (strain NIES-843 / IAM M-2473).